A 315-amino-acid polypeptide reads, in one-letter code: Probable cytochrome c oxidase subunit 2 (315 aa).

The next 3 membrane-spanning stretches (helical) occupy residues 54–74 (IALI…PLPW), 96–116 (LLYI…FVCI), and 133–153 (VLIE…IAVP). Cu cation is bound by residues His235, Cys270, Cys274, and His278.

It belongs to the cytochrome c oxidase subunit 2 family. It depends on Cu cation as a cofactor. Requires heme as cofactor.

The protein localises to the cell membrane. It catalyses the reaction 4 Fe(II)-[cytochrome c] + O2 + 8 H(+)(in) = 4 Fe(III)-[cytochrome c] + 2 H2O + 4 H(+)(out). Its function is as follows. Subunits I and II form the functional core of the enzyme complex. Electrons originating in cytochrome c are transferred via heme a and Cu(A) to the binuclear center formed by heme a3 and Cu(B). The sequence is that of Probable cytochrome c oxidase subunit 2 (ctaC) from Rickettsia conorii (strain ATCC VR-613 / Malish 7).